A 118-amino-acid chain; its full sequence is UPF0295 protein BCG9842_B4782 (118 aa).

The next 2 membrane-spanning stretches (helical) occupy residues 12 to 32 (IRTFALSLVFIGLFIAYLGVF) and 43 to 63 (FMMVGFLAVIASTVVYFWIGM).

The protein belongs to the UPF0295 family.

The protein resides in the cell membrane. This chain is UPF0295 protein BCG9842_B4782, found in Bacillus cereus (strain G9842).